The primary structure comprises 166 residues: 3-isopropylmalate dehydratase small subunit (166 aa).

The protein belongs to the LeuD family. LeuD type 2 subfamily. In terms of assembly, heterodimer of LeuC and LeuD.

The catalysed reaction is (2R,3S)-3-isopropylmalate = (2S)-2-isopropylmalate. Its pathway is amino-acid biosynthesis; L-leucine biosynthesis; L-leucine from 3-methyl-2-oxobutanoate: step 2/4. Catalyzes the isomerization between 2-isopropylmalate and 3-isopropylmalate, via the formation of 2-isopropylmaleate. The polypeptide is 3-isopropylmalate dehydratase small subunit (Aliarcobacter butzleri (strain RM4018) (Arcobacter butzleri)).